Here is a 355-residue protein sequence, read N- to C-terminus: Protein-glutamate methylesterase/protein-glutamine glutaminase (355 aa).

A Response regulatory domain is found at 4 to 121 (KVLIIDDSAL…ANGMHEYSEM (118 aa)). Asp55 carries the 4-aspartylphosphate modification. The 193-residue stretch at 156–348 (LISSEKLIII…GRVLQYLAAN (193 aa)) folds into the CheB-type methylesterase domain. Catalysis depends on residues Ser168, His194, and Asp290.

This sequence belongs to the CheB family. Post-translationally, phosphorylated by CheA. Phosphorylation of the N-terminal regulatory domain activates the methylesterase activity.

The protein resides in the cytoplasm. It carries out the reaction [protein]-L-glutamate 5-O-methyl ester + H2O = L-glutamyl-[protein] + methanol + H(+). It catalyses the reaction L-glutaminyl-[protein] + H2O = L-glutamyl-[protein] + NH4(+). Involved in chemotaxis. Part of a chemotaxis signal transduction system that modulates chemotaxis in response to various stimuli. Catalyzes the demethylation of specific methylglutamate residues introduced into the chemoreceptors (methyl-accepting chemotaxis proteins or MCP) by CheR. Also mediates the irreversible deamidation of specific glutamine residues to glutamic acid. The sequence is that of Protein-glutamate methylesterase/protein-glutamine glutaminase from Methylobacillus flagellatus (strain ATCC 51484 / DSM 6875 / VKM B-1610 / KT).